The sequence spans 259 residues: Type III pantothenate kinase (259 aa).

Position 6-13 (6-13) interacts with ATP; it reads DIGNTNVV. Residue 107-110 coordinates substrate; sequence GADR. Asp-109 (proton acceptor) is an active-site residue. Asp-129 is a binding site for K(+). Thr-132 provides a ligand contact to ATP. Thr-184 serves as a coordination point for substrate.

The protein belongs to the type III pantothenate kinase family. In terms of assembly, homodimer. The cofactor is NH4(+). K(+) serves as cofactor.

It localises to the cytoplasm. It carries out the reaction (R)-pantothenate + ATP = (R)-4'-phosphopantothenate + ADP + H(+). The protein operates within cofactor biosynthesis; coenzyme A biosynthesis; CoA from (R)-pantothenate: step 1/5. Catalyzes the phosphorylation of pantothenate (Pan), the first step in CoA biosynthesis. This is Type III pantothenate kinase from Thermomicrobium roseum (strain ATCC 27502 / DSM 5159 / P-2).